The sequence spans 116 residues: Large ribosomal subunit protein uL18 (116 aa).

The protein belongs to the universal ribosomal protein uL18 family. In terms of assembly, part of the 50S ribosomal subunit; part of the 5S rRNA/L5/L18/L25 subcomplex. Contacts the 5S and 23S rRNAs.

This is one of the proteins that bind and probably mediate the attachment of the 5S RNA into the large ribosomal subunit, where it forms part of the central protuberance. This is Large ribosomal subunit protein uL18 from Shewanella loihica (strain ATCC BAA-1088 / PV-4).